The following is a 572-amino-acid chain: Phosphoenolpyruvate-protein phosphotransferase (572 aa).

H191 serves as the catalytic Tele-phosphohistidine intermediate. Phosphoenolpyruvate is bound by residues R298 and R334. 2 residues coordinate Mg(2+): E433 and D457. Phosphoenolpyruvate is bound by residues 456 to 457 and R467; that span reads ND. Residue C504 is the Proton donor of the active site.

The protein belongs to the PEP-utilizing enzyme family. In terms of assembly, homodimer. Mg(2+) is required as a cofactor.

It localises to the cytoplasm. The catalysed reaction is L-histidyl-[protein] + phosphoenolpyruvate = N(pros)-phospho-L-histidyl-[protein] + pyruvate. General (non sugar-specific) component of the phosphoenolpyruvate-dependent sugar phosphotransferase system (sugar PTS). This major carbohydrate active-transport system catalyzes the phosphorylation of incoming sugar substrates concomitantly with their translocation across the cell membrane. Enzyme I transfers the phosphoryl group from phosphoenolpyruvate (PEP) to the phosphoryl carrier protein (HPr). In Staphylococcus aureus (strain Mu50 / ATCC 700699), this protein is Phosphoenolpyruvate-protein phosphotransferase (ptsI).